Reading from the N-terminus, the 64-residue chain is Sperm protamine P1 (64 aa).

Residues 1–64 are disordered; that stretch reads MARYRHSRSR…SRRRRRRYYY (64 aa).

It belongs to the protamine P1 family. As to expression, testis.

Its subcellular location is the nucleus. It localises to the chromosome. Protamines substitute for histones in the chromatin of sperm during the haploid phase of spermatogenesis. They compact sperm DNA into a highly condensed, stable and inactive complex. This chain is Sperm protamine P1 (PRM1), found in Hypsiprymnodon moschatus (Musky rat kangaroo).